The sequence spans 219 residues: uncharacterized protein (219 aa).

This is an uncharacterized protein from Escherichia coli (strain K12).